Reading from the N-terminus, the 134-residue chain is Replication enhancer protein (134 aa).

This sequence belongs to the geminiviridae replication enhancer protein family. In terms of assembly, homooligomer. Interacts with the replication-associated protein (REP). Interacts with host proliferating cell nuclear antigen (PCNA). Interacts with host retinoblastoma-related protein 1 (RBR1), and may thereby deregulate the host cell cycle. Oligomerization and interaction with PCNA are necessary for optimal replication enhancement.

Increases viral DNA accumulation. Enhances infectivity and symptom expression. This is Replication enhancer protein from Tomato leaf curl virus (strain Australia) (ToLCV).